A 373-amino-acid chain; its full sequence is Thyroid hormone receptor beta (373 aa).

Residues 1 to 18 are modulating; it reads MPSSMSGYIPSYLDKDEL. C19, C22, C36, C39, C57, C63, C73, and C76 together coordinate Zn(2+). NR C4-type zinc fingers lie at residues 19–39 and 57–81; these read CVVC…CEGC and CKYE…FKKC. The nuclear receptor DNA-binding region spans 19 to 93; the sequence is CVVCGDKATG…VGMATDLVLD (75 aa). The NR LBD domain occupies 129–373; sequence EEWELIQVVT…PPLFLEVFED (245 aa). 3,3',5-triiodo-L-thyronine is bound by residues R194, N243, and H347. L-thyroxine-binding residues include R194, N243, and H347.

It belongs to the nuclear hormone receptor family. NR1 subfamily.

Its subcellular location is the nucleus. Nuclear hormone receptor that can act as a repressor or activator of transcription. High affinity receptor for thyroid hormones, including triiodothyronine and thyroxine. The protein is Thyroid hormone receptor beta (thrb) of Aquarana catesbeiana (American bullfrog).